The sequence spans 314 residues: Acetaldehyde dehydrogenase 1 (314 aa).

Residue 11–14 (SGNI) coordinates NAD(+). The active-site Acyl-thioester intermediate is C129. NAD(+) is bound by residues 160–168 (SAGPGTRAN) and N292.

The protein belongs to the acetaldehyde dehydrogenase family.

It carries out the reaction acetaldehyde + NAD(+) + CoA = acetyl-CoA + NADH + H(+). This is Acetaldehyde dehydrogenase 1 from Nocardioides sp. (strain ATCC BAA-499 / JS614).